Reading from the N-terminus, the 178-residue chain is ATP synthase subunit delta (178 aa).

This sequence belongs to the ATPase delta chain family. As to quaternary structure, F-type ATPases have 2 components, F(1) - the catalytic core - and F(0) - the membrane proton channel. F(1) has five subunits: alpha(3), beta(3), gamma(1), delta(1), epsilon(1). F(0) has three main subunits: a(1), b(2) and c(10-14). The alpha and beta chains form an alternating ring which encloses part of the gamma chain. F(1) is attached to F(0) by a central stalk formed by the gamma and epsilon chains, while a peripheral stalk is formed by the delta and b chains.

The protein localises to the cell membrane. F(1)F(0) ATP synthase produces ATP from ADP in the presence of a proton or sodium gradient. F-type ATPases consist of two structural domains, F(1) containing the extramembraneous catalytic core and F(0) containing the membrane proton channel, linked together by a central stalk and a peripheral stalk. During catalysis, ATP synthesis in the catalytic domain of F(1) is coupled via a rotary mechanism of the central stalk subunits to proton translocation. Its function is as follows. This protein is part of the stalk that links CF(0) to CF(1). It either transmits conformational changes from CF(0) to CF(1) or is implicated in proton conduction. This is ATP synthase subunit delta from Streptococcus equi subsp. zooepidemicus (strain H70).